The chain runs to 546 residues: Chaperonin GroEL (546 aa).

Residues 30-33 (TLGP), lysine 51, 87-91 (DGTTT), glycine 415, and aspartate 497 contribute to the ATP site. Residues 527–546 (PKKDSPAPAMPGGGMGGMDF) form a disordered region. Over residues 537-546 (PGGGMGGMDF) the composition is skewed to gly residues.

The protein belongs to the chaperonin (HSP60) family. Forms a cylinder of 14 subunits composed of two heptameric rings stacked back-to-back. Interacts with the co-chaperonin GroES.

It localises to the cytoplasm. The enzyme catalyses ATP + H2O + a folded polypeptide = ADP + phosphate + an unfolded polypeptide.. Its function is as follows. Together with its co-chaperonin GroES, plays an essential role in assisting protein folding. The GroEL-GroES system forms a nano-cage that allows encapsulation of the non-native substrate proteins and provides a physical environment optimized to promote and accelerate protein folding. The polypeptide is Chaperonin GroEL (Methylobacterium radiotolerans (strain ATCC 27329 / DSM 1819 / JCM 2831 / NBRC 15690 / NCIMB 10815 / 0-1)).